The sequence spans 550 residues: Thioredoxin domain-containing protein 2 (550 aa).

The disordered stretch occupies residues M1–Q50. Residues S42 and S51 each carry the phosphoserine modification. The interval M63–S428 is disordered. Composition is skewed to polar residues over residues P73–T87, P96–L105, and K112–T140. A run of 22 repeats spans residues Q104–K118, Q119–T133, Y134–T148, H149–I163, Q164–I178, Q179–I193, Q194–I208, Q209–I223, Q224–I238, Q239–I252, Q253–I267, Q268–M282, K283–I297, Q298–A312, Q313–L327, P328–I342, Q343–Q357, A358–I384, Q385–Q399, S400–V412, Q413–V425, and Q426–E440. The 22 X 15 AA approximate tandem repeat of Q-P-K-X-G-D-I-P-K-S-[PS]-E-[KE]-X-I stretch occupies residues Q104 to E440. Composition is skewed to basic and acidic residues over residues T148–E205, K217–T259, Q277–I304, and Q313–I348. S158 bears the Phosphoserine mark. 2 positions are modified to phosphoserine: S351 and S379. One can recognise a Thioredoxin domain in the interval K401 to K550. S407 is subject to Phosphoserine. A disulfide bridge connects residues C477 and C480.

Testis-specific. Strongly expressed in the testicular seminiferous tubules, mostly in the round spermatids.

It is found in the cytoplasm. Probably plays a regulatory role in sperm development. May participate in regulation of fibrous sheath (FS) assembly by supporting the formation of disulfide bonds during sperm tail morphogenesis. May also be required to rectify incorrect disulfide pairing and generate suitable pairs between the FS constituents. Can reduce disulfide bonds in vitro in the presence of NADP and thioredoxin reductase. The sequence is that of Thioredoxin domain-containing protein 2 (Txndc2) from Rattus norvegicus (Rat).